A 279-amino-acid chain; its full sequence is Cyanocobalamin reductase / alkylcobalamin dealkylase (279 aa).

Substrate is bound by residues aspartate 104, 115–118 (ILAQ), 129–131 (YYQ), cysteine 149, and isoleucine 160. The interval 239-279 (PSEHPSTTSELPLSLLTKPQNSRRARSWLSPSVSPPVSPGP) is disordered. Residues 243–257 (PSTTSELPLSLLTKP) show a composition bias toward low complexity. Serine 247, serine 272, and serine 276 each carry phosphoserine.

The protein belongs to the MMACHC family. As to quaternary structure, monomer in the absence of bound substrate. Homodimer; dimerization is triggered by binding to FMN or adenosylcobalamin. Interacts with LMBRD1 and ABCD4; the interaction ensures the transport of cobalamin from the lysosome to the cytoplasm. Forms a multiprotein complex with MMADHC, MTR and MTRR; the interaction with MTR could modulate MMACHC-dependent processing of cobalamin. Heterodimer with MMADHC; the interaction might play a role in the regulation of the balance between AdoCbl and MeCbl synthesis. FAD serves as cofactor. Requires FMN as cofactor. As to expression, detected in liver and kidney (at protein level). Detected in embryos.

It is found in the cytoplasm. It localises to the cytosol. It catalyses the reaction 2 cob(II)alamin-[cyanocobalamin reductase] + 2 hydrogen cyanide + NADP(+) = 2 cyanocob(III)alamin + 2 apo-[cyanocobalamin reductase] + NADPH + H(+). It carries out the reaction apo-[alkylcobalamin reductase] + an R-cob(III)alamin + glutathione = cob(I)alamin-[alkylcobalamin reductase] + an S-substituted glutathione + H(+). The catalysed reaction is apo-[alkylcobalamin reductase] + methylcob(III)alamin + glutathione = S-methyl glutathione + cob(I)alamin-[alkylcobalamin reductase] + H(+). The enzyme catalyses apo-[alkylcobalamin reductase] + adenosylcob(III)alamin + glutathione = S-adenosylglutathione + cob(I)alamin-[alkylcobalamin reductase] + H(+). Cobalamin (vitamin B12) cytosolic chaperone that catalyzes the reductive decyanation of cyanocob(III)alamin (cyanocobalamin, CNCbl) to yield cob(II)alamin and cyanide, using FAD or FMN as cofactors and NADPH as cosubstrate. Cyanocobalamin constitutes the inactive form of vitamin B12 introduced from the diet, and is converted into the active cofactors methylcobalamin (MeCbl) involved in methionine biosynthesis, and 5'-deoxyadenosylcobalamin (AdoCbl) involved in the TCA cycle. Forms a complex with the lysosomal transporter ABCD4 and its chaperone LMBRD1, to transport cobalamin across the lysosomal membrane into the cytosol. The processing of cobalamin in the cytosol occurs in a multiprotein complex composed of at least MMACHC, MMADHC, MTRR (methionine synthase reductase) and MTR (methionine synthase) which may contribute to shuttle safely and efficiently cobalamin towards MTR in order to produce methionine. Also acts as a glutathione transferase by catalyzing the dealkylation of the alkylcob(III)alamins MeCbl and AdoCbl, using the thiolate of glutathione for nucleophilic displacement to generate cob(I)alamin and the corresponding glutathione thioether. The conversion of incoming MeCbl or AdoCbl into a common intermediate cob(I)alamin is necessary to meet the cellular needs for both cofactors. Cysteine and homocysteine cannot substitute for glutathione in this reaction. This chain is Cyanocobalamin reductase / alkylcobalamin dealkylase, found in Mus musculus (Mouse).